A 442-amino-acid chain; its full sequence is GTPase Der (442 aa).

EngA-type G domains lie at 3–167 and 177–350; these read PTIV…PADD and PRVA…AAAM. Residues 9–16, 56–60, 119–122, 183–190, 230–234, and 295–298 contribute to the GTP site; these read GRPNVGKS, DTAGF, NKAE, DTAGL, and NKWD. The KH-like domain maps to 351 to 435; the sequence is SNLSTPRLTR…PLRIQFRTAH (85 aa).

Belongs to the TRAFAC class TrmE-Era-EngA-EngB-Septin-like GTPase superfamily. EngA (Der) GTPase family. Associates with the 50S ribosomal subunit.

Its function is as follows. GTPase that plays an essential role in the late steps of ribosome biogenesis. This Azoarcus sp. (strain BH72) protein is GTPase Der.